Consider the following 2136-residue polypeptide: Protein CELLULOSE SYNTHASE INTERACTIVE 3 (2136 aa).

42 ARM repeats span residues 27–66 (MEMDDPEKAMATVAQLIEQLHAKTSSPQDKELTTARLLGI), 71–111 (REAR…VLCK), 113–152 (KDLRLKVLLGGCIPPLLSVLKSGTMETRKAAAEAIYEVSS), 159–201 (HIGM…NLCG), 204–243 (DGYWRLTLEGSGVDIVVSLLSSDNPNSQANAASLLARLVL), 246–286 (CDSI…ALSA), 289–337 (DEAK…NVFG), 376–417 (PESS…SLYG), 419–458 (SSLSCYLDDAEAKRVLIALITMASADVRERLIICLSGLCH), 461–500 (VGIWEAIGKREGIQLFISFLGLSSEQHQEYAVEMLKILTA), 503–542 (DDSKWAVTAAGGIPPLVQLLETGSQKAKEDAACILWNLCC), 545–584 (EEIRDCVERAGGIPAFLWLLKTGGPNSQETSAKTLVKLVH), 586–618 (ADPATINQLLALLLGDDPTSKIQVIEVLGHVLS), 619–663 (KASQ…DLFS), 666–705 (QDICGHLATDDIINPWIKLLTNNTQNVAKQVARALDALSR), 711–750 (NNKKKSYIAEGDIKSLIKLAKNSSIESAENAVSALANLLS), 752–791 (PDIAAEALAEDVVSAFTRILADGSPEGKRNASRALHQLLK), 811–848 (SLVDSLKSIDVDSADAFNILEVVALLAKTKSGVNFSYP), 849–887 (PWIALAEVPSSLETLVQCLAEGHTLVQDKAIEVLSRLCS), 936–980 (QLIT…GFLE), 1013–1041 (SVDAKSKVIVMEAGGLEVLVGKLARYTSS), 1042–1083 (AQAE…TLAV), 1109–1149 (RGIN…SLVK), 1163–1204 (EDVR…RIAD), 1207–1247 (DTNK…VLFS), 1249–1288 (HELRQNEMALSSLNQLIAVLRLGSRSARYSAAGALNELFD), 1290–1329 (ENIRNSEIACQAVQPLMDILGSVSESEQEVALSALIKLSS), 1333–1375 (SNTA…VVFS), 1377–1416 (KNIRTSASASGCMKPLITLMQSERSAAVEAAVFAIKILLD), 1418–1457 (EQHLELAAAHNIQELLVGLVSGKNYVIIEASLSALIKLGK), 1460–1499 (VPRKLDMVEAGIIERCLELLPGASSSLCSAVVELFRILTN), 1518–1546 (AVLLRSDLTLWGQHSALQALVNILEKQQT), 1547–1585 (LEAFSFTPSEAIVPLISFLESSSQAIQQLGAELLSHFLT), 1587–1626 (EDFQQDITTQSAVVPLVRLAGIGILSLQETAIKALEKISA), 1628–1669 (WPKA…NILQ), 1670–1704 (YDAECFFRVELPVLVKLLFSTIESTVLLALKALML), 1710–1750 (ASST…NNPR), 1790–1833 (SQHE…NFVM), 1836–1875 (RTNRRAVAEAGGVLLIQELLLSCNPEVSGQAALMVKFLFS), 1921–1960 (PKLRASEAATFCIPHLVGALKSGVEDVQGLVLDILYLLRH), 1969–2008 (VAKSQAMIAAEAIPVLQMLMKTCPPRFHDKADSLLHCLPG), and 2010–2035 (LTVNVMRANNLKQSMATTNAFCQLTI). The C2 domain maps to 1989-2106 (KTCPPRFHDK…VTEGEYSGSL (118 aa)).

In terms of assembly, associates with cellulase synthase (CESA) complexes. Binds to cortical microtubules. Interacts with CESA3 and CESA6. Expressed in dark-grown hypocotyls, leaves (confined to vasculature and trichomes), stamen, pollen, developing siliques, and roots. Restricted in meristematic tissue of the shoot and root. Present in distinct punctae at the cell cortex, called microtubule-associated cellulose synthase compartments, that move with constant velocities of 10 to 3000 nm/min.

Its subcellular location is the cell membrane. The protein resides in the cytoplasm. The protein localises to the cytoskeleton. It localises to the endomembrane system. In terms of biological role, regulator of the microtubular cytoskeleton. Microtubule-associated protein involved in the association of cellulase synthase (CESA) complexes (CSCs) and cortical microtubules. Promotes dynamics of CSCs in the plasma membrane in both microtubules-dependent and microtubules-independent manners. Regulates primary cell wall biosynthesis and cellulose microfibrils organization. The polypeptide is Protein CELLULOSE SYNTHASE INTERACTIVE 3 (Arabidopsis thaliana (Mouse-ear cress)).